The following is a 380-amino-acid chain: Queuine tRNA-ribosyltransferase (380 aa).

Aspartate 96 serves as the catalytic Proton acceptor. Substrate is bound by residues 96–100 (DSGGF), aspartate 150, glutamine 193, and glycine 220. The tract at residues 251 to 257 (GVGAPDS) is RNA binding. Aspartate 270 functions as the Nucleophile in the catalytic mechanism. The tract at residues 275-279 (TRIAR) is RNA binding; important for wobble base 34 recognition. Cysteine 308, cysteine 310, cysteine 313, and histidine 339 together coordinate Zn(2+).

This sequence belongs to the queuine tRNA-ribosyltransferase family. In terms of assembly, homodimer. Within each dimer, one monomer is responsible for RNA recognition and catalysis, while the other monomer binds to the replacement base PreQ1. Zn(2+) is required as a cofactor.

The enzyme catalyses 7-aminomethyl-7-carbaguanine + guanosine(34) in tRNA = 7-aminomethyl-7-carbaguanosine(34) in tRNA + guanine. It functions in the pathway tRNA modification; tRNA-queuosine biosynthesis. In terms of biological role, catalyzes the base-exchange of a guanine (G) residue with the queuine precursor 7-aminomethyl-7-deazaguanine (PreQ1) at position 34 (anticodon wobble position) in tRNAs with GU(N) anticodons (tRNA-Asp, -Asn, -His and -Tyr). Catalysis occurs through a double-displacement mechanism. The nucleophile active site attacks the C1' of nucleotide 34 to detach the guanine base from the RNA, forming a covalent enzyme-RNA intermediate. The proton acceptor active site deprotonates the incoming PreQ1, allowing a nucleophilic attack on the C1' of the ribose to form the product. After dissociation, two additional enzymatic reactions on the tRNA convert PreQ1 to queuine (Q), resulting in the hypermodified nucleoside queuosine (7-(((4,5-cis-dihydroxy-2-cyclopenten-1-yl)amino)methyl)-7-deazaguanosine). The chain is Queuine tRNA-ribosyltransferase from Streptococcus pyogenes serotype M49 (strain NZ131).